A 462-amino-acid polypeptide reads, in one-letter code: Envelope glycoprotein C (462 aa).

Positions 1–23 (MAPRGSGRLEAVVFAVMVLFCSG) are cleaved as a signal peptide. The Virion surface portion of the chain corresponds to 24–433 (TSTATTAAAP…NMPLRQGRPM (410 aa)). Positions 29 to 38 (TAAAPASSPG) are enriched in low complexity. Residues 29–57 (TAAAPASSPGIQTSSPAPGTGSTRLPGTR) are disordered. Over residues 39–57 (IQTSSPAPGTGSTRLPGTR) the composition is skewed to polar residues. N-linked (GlcNAc...) asparagine; by host glycosylation is found at N66, N94, N136, N173, N249, and N417. The chain crosses the membrane as a helical span at residues 434-454 (LICLAVVMGLFVLGSFLAVVI). At 455–462 (SACLWGSG) the chain is on the cytoplasmic side.

It belongs to the herpesviridae glycoprotein C family.

The protein localises to the virion membrane. This Psittacid herpesvirus 1 (isolate Amazon parrot/-/97-0001/1997) (PsHV-1) protein is Envelope glycoprotein C (gC).